We begin with the raw amino-acid sequence, 364 residues long: Nicotinate-nucleotide--dimethylbenzimidazole phosphoribosyltransferase (364 aa).

E332 acts as the Proton acceptor in catalysis.

Belongs to the CobT family.

The catalysed reaction is 5,6-dimethylbenzimidazole + nicotinate beta-D-ribonucleotide = alpha-ribazole 5'-phosphate + nicotinate + H(+). It functions in the pathway nucleoside biosynthesis; alpha-ribazole biosynthesis; alpha-ribazole from 5,6-dimethylbenzimidazole: step 1/2. In terms of biological role, catalyzes the synthesis of alpha-ribazole-5'-phosphate from nicotinate mononucleotide (NAMN) and 5,6-dimethylbenzimidazole (DMB). This Salinispora tropica (strain ATCC BAA-916 / DSM 44818 / JCM 13857 / NBRC 105044 / CNB-440) protein is Nicotinate-nucleotide--dimethylbenzimidazole phosphoribosyltransferase.